The primary structure comprises 274 residues: Caldesmon, smooth muscle (274 aa).

Disordered regions lie at residues 1–102 (SNLK…FSPK) and 179–274 (KGNV…EKEP). Composition is skewed to basic and acidic residues over residues 12–21 (GSEKLKEKQQ) and 28–95 (DELK…EKKP). The span at 182-194 (VFSSPGGTGTPNK) shows a compositional bias: polar residues. Basic and acidic residues-rich tracts occupy residues 226-245 (SDLR…KQSV) and 260-274 (KKSE…EKEP).

It is found in the cytoplasm. Its subcellular location is the cytoskeleton. The protein resides in the myofibril. It localises to the stress fiber. Functionally, control of actomyosin interactions in smooth muscle and nonmuscle cells (could act as a bridge between myosin and actin filaments). Inhibits the actin-activated ATPase of myosin this inhibition is attenuated by calcium-calmodulin and is potentiated by tropomyosin. Interacts with actin, myosin, 2 molecules of tropomyosin and with calmodulin. The chain is Caldesmon, smooth muscle (CALD1) from Meleagris gallopavo (Wild turkey).